A 638-amino-acid chain; its full sequence is LEAF RUST 10 DISEASE-RESISTANCE LOCUS RECEPTOR-LIKE PROTEIN KINASE-like 2.1 (638 aa).

The N-terminal stretch at 1-29 is a signal peptide; that stretch reads MINLSLYQTNSLSYTIIWMLFVIPSCVLS. The Extracellular segment spans residues 30–264; that stretch reads VDERQKHCSP…EHTCGKMGIG (235 aa). N-linked (GlcNAc...) asparagine glycans are attached at residues asparagine 69, asparagine 114, asparagine 136, asparagine 204, and asparagine 239. Residues 265–285 traverse the membrane as a helical segment; the sequence is IGLGCGFLGATLITVCLLCFF. Topologically, residues 286–638 are cytoplasmic; the sequence is FQKRRTSHHL…YTEVFIGSTS (353 aa). A Protein kinase domain is found at 321–609; the sequence is KLFSHTLGKG…VLEVPPKPSI (289 aa). ATP-binding positions include 327–335 and lysine 349; that span reads LGKGGFGTV. A Phosphotyrosine modification is found at tyrosine 393. Catalysis depends on aspartate 444, which acts as the Proton acceptor. Threonine 484 bears the Phosphothreonine mark.

The protein belongs to the protein kinase superfamily. Ser/Thr protein kinase family.

The protein resides in the membrane. The catalysed reaction is L-seryl-[protein] + ATP = O-phospho-L-seryl-[protein] + ADP + H(+). It carries out the reaction L-threonyl-[protein] + ATP = O-phospho-L-threonyl-[protein] + ADP + H(+). This Arabidopsis thaliana (Mouse-ear cress) protein is LEAF RUST 10 DISEASE-RESISTANCE LOCUS RECEPTOR-LIKE PROTEIN KINASE-like 2.1.